A 344-amino-acid chain; its full sequence is Sorting nexin-16 (344 aa).

Positions 1–10 (MATPYVPVPM) are enriched in pro residues. 2 disordered regions span residues 1–49 (MATP…DSSV) and 83–105 (SIEYSARPRDTEEQHPDALNWED). Positions 14–26 (NSASSFTNNRNQR) are enriched in polar residues. A compositionally biased stretch (low complexity) spans 27-40 (SSSFGSVSTSSNSS). Residues 88–105 (ARPRDTEEQHPDALNWED) are compositionally biased toward basic and acidic residues. Residues 105-218 (DRPSTPTILG…EFLCLDDPPG (114 aa)) form the PX domain. The a 1,2-diacyl-sn-glycero-3-phospho-(1D-myo-inositol-3-phosphate) site is built by Arg144, Thr146, and Arg184. The residue at position 222 (Ser222) is a Phosphoserine. Residues 223-278 (LEESRAFCETLEETNYHLQRELLEKQKEVESLKKLLGEKQLHIDALETRIRTLSLE) adopt a coiled-coil conformation.

The protein belongs to the sorting nexin family. Homooligomer. Interacts with EGFR.

The protein resides in the early endosome membrane. It localises to the late endosome membrane. The protein localises to the cytoplasm. It is found in the lysosome. Its function is as follows. May be involved in several stages of intracellular trafficking. Plays a role in protein transport from early to late endosomes. Plays a role in protein transport to the lysosome. Promotes degradation of EGFR after EGF signaling. The sequence is that of Sorting nexin-16 (Snx16) from Rattus norvegicus (Rat).